A 223-amino-acid polypeptide reads, in one-letter code: Phosphoribosylformylglycinamidine synthase subunit PurQ (223 aa).

One can recognise a Glutamine amidotransferase type-1 domain in the interval 4–223; it reads KIGVITFPGT…FLSAVGTIAA (220 aa). Cysteine 87 serves as the catalytic Nucleophile. Catalysis depends on residues histidine 195 and glutamate 197.

Part of the FGAM synthase complex composed of 1 PurL, 1 PurQ and 2 PurS subunits.

The protein resides in the cytoplasm. The enzyme catalyses N(2)-formyl-N(1)-(5-phospho-beta-D-ribosyl)glycinamide + L-glutamine + ATP + H2O = 2-formamido-N(1)-(5-O-phospho-beta-D-ribosyl)acetamidine + L-glutamate + ADP + phosphate + H(+). It catalyses the reaction L-glutamine + H2O = L-glutamate + NH4(+). It participates in purine metabolism; IMP biosynthesis via de novo pathway; 5-amino-1-(5-phospho-D-ribosyl)imidazole from N(2)-formyl-N(1)-(5-phospho-D-ribosyl)glycinamide: step 1/2. Part of the phosphoribosylformylglycinamidine synthase complex involved in the purines biosynthetic pathway. Catalyzes the ATP-dependent conversion of formylglycinamide ribonucleotide (FGAR) and glutamine to yield formylglycinamidine ribonucleotide (FGAM) and glutamate. The FGAM synthase complex is composed of three subunits. PurQ produces an ammonia molecule by converting glutamine to glutamate. PurL transfers the ammonia molecule to FGAR to form FGAM in an ATP-dependent manner. PurS interacts with PurQ and PurL and is thought to assist in the transfer of the ammonia molecule from PurQ to PurL. The chain is Phosphoribosylformylglycinamidine synthase subunit PurQ from Corynebacterium glutamicum (strain ATCC 13032 / DSM 20300 / JCM 1318 / BCRC 11384 / CCUG 27702 / LMG 3730 / NBRC 12168 / NCIMB 10025 / NRRL B-2784 / 534).